The sequence spans 57 residues: UPF0391 membrane protein BRADO2787 (57 aa).

2 helical membrane passes run 6–26 (WALL…TGVS) and 35–55 (ILFY…LTIF).

This sequence belongs to the UPF0391 family.

It is found in the cell membrane. This Bradyrhizobium sp. (strain ORS 278) protein is UPF0391 membrane protein BRADO2787.